We begin with the raw amino-acid sequence, 358 residues long: Transcriptional repressor protein KorB (358 aa).

Over residues M1–D42 the composition is skewed to low complexity. Disordered stretches follow at residues M1–E79 and D256–K305. Over residues A275 to D285 the composition is skewed to acidic residues. Over residues Q286–K305 the composition is skewed to basic and acidic residues.

It belongs to the ParB family.

In conjunction with KorA, inhibits the transcription of the kilA, trfA and korAB operons. Is also involved in the negative control of the kilB operon. This is Transcriptional repressor protein KorB (korB) from Escherichia coli.